A 358-amino-acid polypeptide reads, in one-letter code: Naringenin,2-oxoglutarate 3-dioxygenase (358 aa).

Residues 190–294 form the Fe2OG dioxygenase domain; sequence CVDMDQKIVV…RLSIATFQNP (105 aa). 3 residues coordinate Fe cation: histidine 217, aspartate 219, and histidine 275. 2-oxoglutarate is bound at residue arginine 285.

The protein belongs to the iron/ascorbate-dependent oxidoreductase family. Interacts with Dihydroflavonol-4-reductase (TT3), chalcone synthase (TT4) and chalcone isomerase (TT5) to form a flavonoid enzyme complex. The cofactor is Fe(2+). L-ascorbate is required as a cofactor.

It carries out the reaction a (2S)-flavan-4-one + 2-oxoglutarate + O2 = a (2R,3R)-dihydroflavonol + succinate + CO2. It participates in secondary metabolite biosynthesis; flavonoid biosynthesis. Catalyzes the 3-beta-hydroxylation of 2S-flavanones to 2R,3R-dihydroflavonols which are intermediates in the biosynthesis of flavonols, anthocyanidins, catechins and proanthocyanidins in plants. In Arabidopsis thaliana (Mouse-ear cress), this protein is Naringenin,2-oxoglutarate 3-dioxygenase (F3H).